A 257-amino-acid chain; its full sequence is Large ribosomal subunit protein uL2 (257 aa).

Glycyl lysine isopeptide (Lys-Gly) (interchain with G-Cter in SUMO2) cross-links involve residues Lys42 and Lys149. The disordered stretch occupies residues 207–232 (VEHPFGGGNHQHIGKPSTIRRDAPAG). His216 is subject to (3S)-3-hydroxyhistidine. Glycyl lysine isopeptide (Lys-Gly) (interchain with G-Cter in SUMO2) cross-links involve residues Lys234 and Lys250.

The protein belongs to the universal ribosomal protein uL2 family. Component of the large ribosomal subunit. Interacts with CRY1. Hydroxylated on His-216 by RIOX1. The modification is impaired by hypoxia.

Its subcellular location is the cytoplasm. In terms of biological role, component of the large ribosomal subunit. The ribosome is a large ribonucleoprotein complex responsible for the synthesis of proteins in the cell. The sequence is that of Large ribosomal subunit protein uL2 (RPL8) from Bos taurus (Bovine).